The sequence spans 491 residues: Cysteine--tRNA ligase (491 aa).

Cysteine 31 is a binding site for Zn(2+). The 'HIGH' region signature appears at 33–43 (PTVYGDAHLGH). Zn(2+)-binding residues include cysteine 226, histidine 251, and glutamate 255. Residues 283-287 (KMGKS) carry the 'KMSKS' region motif. An ATP-binding site is contributed by lysine 286.

This sequence belongs to the class-I aminoacyl-tRNA synthetase family. In terms of assembly, monomer. Requires Zn(2+) as cofactor.

It is found in the cytoplasm. The catalysed reaction is tRNA(Cys) + L-cysteine + ATP = L-cysteinyl-tRNA(Cys) + AMP + diphosphate. The chain is Cysteine--tRNA ligase from Parabacteroides distasonis (strain ATCC 8503 / DSM 20701 / CIP 104284 / JCM 5825 / NCTC 11152).